We begin with the raw amino-acid sequence, 597 residues long: Protein Spindly (597 aa).

N-acetylmethionine is present on methionine 1. Residues 1-445 (MEADITNLRN…LKLKYEPEER (445 aa)) are a coiled coil. Serine 508 and serine 547 each carry phosphoserine. The disordered stretch occupies residues 531 to 597 (PASTEVLHEQ…STPEMQCPQQ (67 aa)). The span at 540 to 549 (QSGNTPSSPR) shows a compositional bias: polar residues. Positions 550-574 (LTEESRLPTKVKERKEATSKLEKGA) are enriched in basic and acidic residues. Positions 583 to 597 (YVSSKSTPEMQCPQQ) are enriched in polar residues.

This sequence belongs to the Spindly family. Interacts with KNTC1 and ZW10. These interactions appear weak and may be transient or indirect. Interacts with dynein intermediate chain and dynactin (DCTN1). Interacts with the catalytically active form of USP45. Monoubiquitinated with'Lys-48' linkage. Deubiquitinated by USP45.

Its subcellular location is the cytoplasm. It localises to the cytoskeleton. The protein localises to the microtubule organizing center. The protein resides in the centrosome. It is found in the chromosome. Its subcellular location is the centromere. It localises to the kinetochore. The protein localises to the nucleus. The protein resides in the spindle pole. Functionally, required for the localization of dynein and dynactin to the mitotic kintochore. Dynein is believed to control the initial lateral interaction between the kinetochore and spindle microtubules and to facilitate the subsequent formation of end-on kinetochore-microtubule attachments mediated by the NDC80 complex. Also required for correct spindle orientation. Does not appear to be required for the removal of spindle assembly checkpoint (SAC) proteins from the kinetochore upon bipolar spindle attachment. Acts as an adapter protein linking the dynein motor complex to various cargos and converts dynein from a non-processive to a highly processive motor in the presence of dynactin. Facilitates the interaction between dynein and dynactin and activates dynein processivity (the ability to move along a microtubule for a long distance without falling off the track). Plays a role in cell migration. This is Protein Spindly (Spdl1) from Rattus norvegicus (Rat).